Here is a 347-residue protein sequence, read N- to C-terminus: UDP-rhamnose/UDP-galactose transporter 1 (347 aa).

10 helical membrane-spanning segments follow: residues 11 to 31 (AVSD…IIMA), 43 to 63 (FGFA…VGMV), 80 to 100 (LLWF…SLML), 103 to 123 (VGFY…LEWI), 132 to 152 (EVKA…VTDV), 159 to 179 (FICA…IGSL), 195 to 215 (APIQ…LLSG), 223 to 243 (MTYG…FCNI), 256 to 276 (SFQV…WLLF), and 285 to 305 (IAGM…VDIE).

This sequence belongs to the TPT transporter family. TPT (TC 2.A.7.9) subfamily. As to expression, widely expressed in the whole plant.

It localises to the golgi apparatus membrane. Functionally, nucleotide-sugar transporter that transports UDP-rhamnose or UDP-galactose and UMP in a strict counter-exchange mode. The protein is UDP-rhamnose/UDP-galactose transporter 1 of Arabidopsis thaliana (Mouse-ear cress).